The following is a 372-amino-acid chain: Enoyl-[acyl-carrier-protein] reductase, mitochondrial (372 aa).

The N-terminal 18 residues, 1–18, are a transit peptide targeting the mitochondrion; that stretch reads MSFFKTAVRRFSSTSITR. The Proton donor role is filled by tyrosine 72. Residues asparagine 157, 183–186, 206–208, 279–282, 304–306, and lysine 365 contribute to the NADP(+) site; these read NSMV, RNR, FGGM, and FWV.

It belongs to the zinc-containing alcohol dehydrogenase family. Quinone oxidoreductase subfamily. As to quaternary structure, homodimer.

It localises to the mitochondrion matrix. It carries out the reaction a 2,3-saturated acyl-[ACP] + NADP(+) = a (2E)-enoyl-[ACP] + NADPH + H(+). In terms of biological role, catalyzes the NADPH-dependent reduction of trans-2-enoyl thioesters in mitochondrial fatty acid synthesis (fatty acid synthesis type II). Fatty acid chain elongation in mitochondria uses acyl carrier protein (ACP) as an acyl group carrier, but the enzyme accepts both ACP and CoA thioesters as substrates in vitro. Required for respiration and the maintenance of the mitochondrial compartment. In Schizosaccharomyces pombe (strain 972 / ATCC 24843) (Fission yeast), this protein is Enoyl-[acyl-carrier-protein] reductase, mitochondrial (etr1).